We begin with the raw amino-acid sequence, 137 residues long: Small ribosomal subunit protein uS12 (137 aa).

Residues 1–23 (MPTINQLVRKPRKSNATKSKSPA) form a disordered region. Asp-102 carries the post-translational modification 3-methylthioaspartic acid.

This sequence belongs to the universal ribosomal protein uS12 family. As to quaternary structure, part of the 30S ribosomal subunit. Contacts proteins S8 and S17. May interact with IF1 in the 30S initiation complex.

In terms of biological role, with S4 and S5 plays an important role in translational accuracy. Its function is as follows. Interacts with and stabilizes bases of the 16S rRNA that are involved in tRNA selection in the A site and with the mRNA backbone. Located at the interface of the 30S and 50S subunits, it traverses the body of the 30S subunit contacting proteins on the other side and probably holding the rRNA structure together. The combined cluster of proteins S8, S12 and S17 appears to hold together the shoulder and platform of the 30S subunit. The sequence is that of Small ribosomal subunit protein uS12 from Leuconostoc citreum (strain KM20).